Reading from the N-terminus, the 89-residue chain is Small ribosomal subunit protein bS20 (89 aa).

The tract at residues 1–22 (MANTASARKRIRQNERRRERNV) is disordered. Residues 12 to 22 (RQNERRRERNV) are compositionally biased toward basic and acidic residues.

The protein belongs to the bacterial ribosomal protein bS20 family.

Its function is as follows. Binds directly to 16S ribosomal RNA. The chain is Small ribosomal subunit protein bS20 from Gluconobacter oxydans (strain 621H) (Gluconobacter suboxydans).